Reading from the N-terminus, the 318-residue chain is Protoheme IX farnesyltransferase (318 aa).

A run of 9 helical transmembrane segments spans residues 29–49, 51–71, 102–122, 123–143, 151–171, 179–199, 219–239, 241–261, and 280–300; these read IIPL…QGQV, PVLL…AQTI, LIFA…FANL, LAAS…THWL, IVIG…AVTG, LIFA…ALMI, ATVK…LLLV, PLHA…AVFI, and LFLY…VDSL.

It belongs to the UbiA prenyltransferase family. Protoheme IX farnesyltransferase subfamily.

It is found in the cell inner membrane. The enzyme catalyses heme b + (2E,6E)-farnesyl diphosphate + H2O = Fe(II)-heme o + diphosphate. It participates in porphyrin-containing compound metabolism; heme O biosynthesis; heme O from protoheme: step 1/1. In terms of biological role, converts heme B (protoheme IX) to heme O by substitution of the vinyl group on carbon 2 of heme B porphyrin ring with a hydroxyethyl farnesyl side group. This chain is Protoheme IX farnesyltransferase, found in Nostoc sp. (strain PCC 7120 / SAG 25.82 / UTEX 2576).